The sequence spans 300 residues: Tumor necrosis factor receptor superfamily member 6B (300 aa).

An N-terminal signal peptide occupies residues 1–29 (MRALEGPGLSLLCLVLALPALLPVPAVRG). 4 TNFR-Cys repeats span residues 31 to 70 (AETPTYPWRDAETGERLVCAQCPPGTFVQRPCRRDSPTTC), 72 to 113 (PCPP…NRAC), 115 to 150 (CRTGFFAHAGFCLEHASCPPGAGVIAPGTPSQNTQC), and 152 to 193 (PCPP…DTLC). 8 cysteine pairs are disulfide-bonded: Cys49–Cys62, Cys52–Cys70, Cys73–Cys88, Cys91–Cys105, Cys95–Cys113, Cys115–Cys126, Cys132–Cys150, and Cys153–Cys168. N-linked (GlcNAc...) asparagine glycosylation occurs at Asn173. Cysteines 174 and 193 form a disulfide.

Detected in fetal lung, brain and liver. Detected in adult stomach, spinal cord, lymph node, trachea, spleen, colon and lung. Highly expressed in several primary tumors from colon, stomach, rectum, esophagus and in SW480 colon carcinoma cells.

The protein localises to the secreted. Its function is as follows. Decoy receptor that can neutralize the cytotoxic ligands TNFS14/LIGHT, TNFSF15 and TNFSF6/FASL. Protects against apoptosis. The polypeptide is Tumor necrosis factor receptor superfamily member 6B (TNFRSF6B) (Homo sapiens (Human)).